Reading from the N-terminus, the 150-residue chain is MKQPSVNIKNKRATFDYELMDTYTAGIVLTGTEIKSIRLGKASLVDTFCYFAKGELWVKNMHIAEYFYGSYNNHTARRDRKLLLNKKELEKIQRGMKDPGFTTVPVRLFINEKGLAKLVVALAKGKKQYDKRESIKEKDDRRDMARMFKR.

This sequence belongs to the SmpB family.

Its subcellular location is the cytoplasm. In terms of biological role, required for rescue of stalled ribosomes mediated by trans-translation. Binds to transfer-messenger RNA (tmRNA), required for stable association of tmRNA with ribosomes. tmRNA and SmpB together mimic tRNA shape, replacing the anticodon stem-loop with SmpB. tmRNA is encoded by the ssrA gene; the 2 termini fold to resemble tRNA(Ala) and it encodes a 'tag peptide', a short internal open reading frame. During trans-translation Ala-aminoacylated tmRNA acts like a tRNA, entering the A-site of stalled ribosomes, displacing the stalled mRNA. The ribosome then switches to translate the ORF on the tmRNA; the nascent peptide is terminated with the 'tag peptide' encoded by the tmRNA and targeted for degradation. The ribosome is freed to recommence translation, which seems to be the essential function of trans-translation. This Bacteroides thetaiotaomicron (strain ATCC 29148 / DSM 2079 / JCM 5827 / CCUG 10774 / NCTC 10582 / VPI-5482 / E50) protein is SsrA-binding protein.